The primary structure comprises 525 residues: ATP synthase subunit alpha (525 aa).

ATP is bound at residue 171–178 (GDRQTGKS).

This sequence belongs to the ATPase alpha/beta chains family. As to quaternary structure, F-type ATPases have 2 components, CF(1) - the catalytic core - and CF(0) - the membrane proton channel. CF(1) has five subunits: alpha(3), beta(3), gamma(1), delta(1), epsilon(1). CF(0) has three main subunits: a(1), b(2) and c(9-12). The alpha and beta chains form an alternating ring which encloses part of the gamma chain. CF(1) is attached to CF(0) by a central stalk formed by the gamma and epsilon chains, while a peripheral stalk is formed by the delta and b chains.

It localises to the cell inner membrane. The enzyme catalyses ATP + H2O + 4 H(+)(in) = ADP + phosphate + 5 H(+)(out). Its function is as follows. Produces ATP from ADP in the presence of a proton gradient across the membrane. The alpha chain is a regulatory subunit. The protein is ATP synthase subunit alpha of Flavobacterium psychrophilum (strain ATCC 49511 / DSM 21280 / CIP 103535 / JIP02/86).